A 380-amino-acid polypeptide reads, in one-letter code: Glucose-1-phosphate adenylyltransferase (380 aa).

Alpha-D-glucose 1-phosphate is bound by residues Gly-164, 179–180 (EK), and Ser-190.

Belongs to the bacterial/plant glucose-1-phosphate adenylyltransferase family. Homotetramer.

The enzyme catalyses alpha-D-glucose 1-phosphate + ATP + H(+) = ADP-alpha-D-glucose + diphosphate. It participates in glycan biosynthesis; glycogen biosynthesis. In terms of biological role, involved in the biosynthesis of ADP-glucose, a building block required for the elongation reactions to produce glycogen. Catalyzes the reaction between ATP and alpha-D-glucose 1-phosphate (G1P) to produce pyrophosphate and ADP-Glc. The polypeptide is Glucose-1-phosphate adenylyltransferase (Streptococcus pneumoniae (strain 70585)).